The primary structure comprises 438 residues: Putative F-box/FBD/LRR-repeat protein At5g44950 (438 aa).

Residues 3 to 49 form the F-box domain; the sequence is RDRISELPDGLLNHILMYLHIEESIRTSVLSSRWRKLWLKVPGLDVN. LRR repeat units follow at residues 246–275 and 286–310; these read LSSL…DLTK and ISSV…KIGQ. The FBD domain maps to 355–407; it reads PEQIDFTNLPRCLISTLEYVEIKQLTMREESGIKLVKYFLENSAVLKKLTLSF.

The protein is Putative F-box/FBD/LRR-repeat protein At5g44950 of Arabidopsis thaliana (Mouse-ear cress).